A 91-amino-acid polypeptide reads, in one-letter code: Small ribosomal subunit protein bS6 (91 aa).

This sequence belongs to the bacterial ribosomal protein bS6 family.

Its function is as follows. Binds together with bS18 to 16S ribosomal RNA. This is Small ribosomal subunit protein bS6 from Leptospira biflexa serovar Patoc (strain Patoc 1 / Ames).